Consider the following 67-residue polypeptide: Large ribosomal subunit protein bL35 (67 aa).

The protein belongs to the bacterial ribosomal protein bL35 family.

The polypeptide is Large ribosomal subunit protein bL35 (Leptospira borgpetersenii serovar Hardjo-bovis (strain JB197)).